The primary structure comprises 768 residues: Cullin-3 (768 aa).

Residue Ser2 is modified to N-acetylserine. The tract at residues 2–41 (SNLSKGTGSRKDTKMRIRAFPMTMDEKYVNSIWDLLKNAI) is interaction with KLHL18. Phosphoserine is present on Ser585. A disordered region spans residues 677–698 (VAAKQGESDPERKETRQKVDDD). The span at 682–698 (GESDPERKETRQKVDDD) shows a compositional bias: basic and acidic residues. The Cullin neddylation domain occupies 698 to 760 (DRKHEIEAAI…REYLARTPED (63 aa)). Residue Lys712 forms a Glycyl lysine isopeptide (Lys-Gly) (interchain with G-Cter in NEDD8) linkage.

It belongs to the cullin family. As to quaternary structure, forms neddylation-dependent homodimers. Component of multiple BCR (BTB-CUL3-RBX1) E3 ubiquitin-protein ligase complexes formed of CUL3, RBX1 and a variable BTB domain-containing protein acting as both, adapter to cullin and substrate recognition subunit. The BCR complex may be active as a heterodimeric complex, in which NEDD8, covalently attached to one CUL3 molecule, binds to the C-terminus of a second CUL3 molecule. Interacts with RBX1, RNF7 and TIP120A/CAND1. Part of the BCR(SPOP) containing SPOP, and of BCR containing homodimeric SPOPL or the heterodimer formed by SPOP and SPOPL. Part of the probable BCR(KLHL9-KLHL13) complex with BTB domain proteins KLHL9 and KLHL13. Part of the BCR(KLHL41) complex containing KLHL41. Component of the BCR(KLHL12) E3 ubiquitin ligase complex, at least composed of CUL3 and KLHL12 and RBX1. Component of the BCR(KLHL3) E3 ubiquitin ligase complex, at least composed of CUL3 and KLHL3 and RBX1. Part of the BCR(ENC1) complex containing ENC1. Part of a complex consisting of BMI1/PCGF4, CUL3 and SPOP. Part of a complex consisting of BRMS1, CUL3 and SPOP. Component of the BCR(KLHL21) E3 ubiquitin ligase complex, at least composed of CUL3, KLHL21 and RBX1. Component of the BCR(KLHL22) E3 ubiquitin ligase complex, at least composed of CUL3, KLHL22 and RBX1. Component of the BCR(KLHL25) E3 ubiquitin ligase complex, at least composed of CUL3, KLHL25 and RBX1. Part of a complex consisting of MACROH2A1, CUL3 and SPOP. Component of the BCR(KLHL42) E3 ubiquitin ligase complex, at least composed of CUL3 and KLHL42. Component of the BCR(KBTBD8) E3 ubiquitin ligase complex, at least composed of CUL3, KBTBD8 and RBX1. Interacts with KLHL42 (via the BTB domain). Interacts with KATNA1; the interaction is enhanced by KLHL42. Interacts with KCTD5, KLHL9, KLHL11, KLHL13, GAN, ZBTB16, KLHL3, KLHL15, KLHL20, KLHL36, GMCL2, BTBD1. Part of a complex that contains CUL3, RBX1 and GAN. Interacts (via BTB domain) with KLHL17; the interaction regulates surface GRIK2 expression. Interacts with KCTD7. Part of the BCR(GAN) complex containing GAN. Part of the BCR(KEAP1) complex containing KEAP1. Interacts with KAT5 and ATF2. Interacts with KCTD17 in the BCR(KCTD17) E3 ubiquitin ligase complex, at least composed of CUL3, KCTD17 and RBX1. Interacts (when neddylated) with ARIH1; leading to activate the E3 ligase activity of ARIH1. Interacts with COPS9. Interacts with PPP2R5B; this interaction is indirect and mediated through KLHL15-binding and leads to PPP2R5B proteasomal degradation. Interacts with RBBP8/CtIP; this interaction is indirect and mediated through KLHL15-binding and leads to RBBP8 proteasomal degradation. Interacts with KLHL24 in the BCR(KLHL24) E3 ubiquitin ligase complex, composed of CUL3, RBX1 and KLHL24. Interacts with RHOBTB2. Interacts with CYCE. Interacts with KLHL10. Interacts with AURKA and KLHL18 (via BTB domain). Interacts (unneddylated form) with DCUN1D1, DCUN1D2, DCUN1D3, DCUN1D4 and DCUN1D5; these interactions promote the cullin neddylation. Component of a BCR3 (BTB-CUL3-RBX1) E3 ubiquitin ligase complex, also named Cul3-RING ubiquitin ligase complex CUL3(KBTBD6/7), composed of CUL3, RBX1, KBTBD6 and KBTBD7. Component of the BCR(KBTBD2) E3 ubiquitin ligase complex, at least composed of CUL3, KBTBD2 and RBX1. Interacts with KBTBD2 (via the BTB domain). Component of the BCR(KBTBD4) E3 ubiquitin ligase complex, at least composed of CUL3, KBTBD4 and RBX1. Post-translationally, neddylated. Attachment of NEDD8 is required for the E3 ubiquitin-protein ligase activity of the BCR complex. Deneddylated via its interaction with the COP9 signalosome (CSN) complex. Widely expressed, with highest expression in brain, spleen and testis. In the testis, it is mainly expressed in spermatids.

The protein resides in the nucleus. It localises to the golgi apparatus. Its subcellular location is the cell projection. The protein localises to the cilium. It is found in the flagellum. The protein resides in the cytoplasm. It localises to the cytoskeleton. Its subcellular location is the spindle. The protein localises to the microtubule organizing center. It is found in the centrosome. The protein resides in the spindle pole. The protein operates within protein modification; protein ubiquitination. Functionally, core component of multiple cullin-RING-based BCR (BTB-CUL3-RBX1) E3 ubiquitin-protein ligase complexes which mediate the ubiquitination and subsequent proteasomal degradation of target proteins. BCR complexes and ARIH1 collaborate in tandem to mediate ubiquitination of target proteins. As a scaffold protein may contribute to catalysis through positioning of the substrate and the ubiquitin-conjugating enzyme. The E3 ubiquitin-protein ligase activity of the complex is dependent on the neddylation of the cullin subunit and is inhibited by the association of the deneddylated cullin subunit with TIP120A/CAND1. The functional specificity of the BCR complex depends on the BTB domain-containing protein as the substrate recognition component. BCR(KLHL42) is involved in ubiquitination of KATNA1. BCR(SPOP) is involved in ubiquitination of BMI1/PCGF4, BRMS1, MACROH2A1 and DAXX, GLI2 and GLI3. Can also form a cullin-RING-based BCR (BTB-CUL3-RBX1) E3 ubiquitin-protein ligase complex containing homodimeric SPOPL or the heterodimer formed by SPOP and SPOPL; these complexes have lower ubiquitin ligase activity. BCR(KLHL9-KLHL13) controls the dynamic behavior of AURKB on mitotic chromosomes and thereby coordinates faithful mitotic progression and completion of cytokinesis. BCR(KLHL12) is involved in ER-Golgi transport by regulating the size of COPII coats, thereby playing a key role in collagen export, which is required for embryonic stem (ES) cells division: BCR(KLHL12) acts by mediating monoubiquitination of SEC31 (SEC31A or SEC31B). BCR(KLHL3) acts as a regulator of ion transport in the distal nephron; by mediating ubiquitination of WNK4. The BCR(KLHL20) E3 ubiquitin ligase complex is involved in interferon response and anterograde Golgi to endosome transport: it mediates both ubiquitination leading to degradation and 'Lys-33'-linked ubiquitination. The BCR(KLHL21) E3 ubiquitin ligase complex regulates localization of the chromosomal passenger complex (CPC) from chromosomes to the spindle midzone in anaphase and mediates the ubiquitination of AURKB. The BCR(KLHL22) ubiquitin ligase complex mediates monoubiquitination of PLK1, leading to PLK1 dissociation from phosphoreceptor proteins and subsequent removal from kinetochores, allowing silencing of the spindle assembly checkpoint (SAC) and chromosome segregation. The BCR(KLHL22) ubiquitin ligase complex is also responsible for the amino acid-stimulated 'Lys-48' polyubiquitination and proteasomal degradation of DEPDC5. Through the degradation of DEPDC5, releases the GATOR1 complex-mediated inhibition of the TORC1 pathway. The BCR(KLHL25) ubiquitin ligase complex is involved in translational homeostasis by mediating ubiquitination and subsequent degradation of hypophosphorylated EIF4EBP1 (4E-BP1). The BCR(KLHL25) ubiquitin ligase complex is also involved in lipid synthesis by mediating ubiquitination and degradation of ACLY. The BCR(KBTBD8) complex acts by mediating monoubiquitination of NOLC1 and TCOF1, leading to remodel the translational program of differentiating cells in favor of neural crest specification. Involved in ubiquitination of cyclin E and of cyclin D1 (in vitro) thus involved in regulation of G1/S transition. Involved in the ubiquitination of KEAP1, ENC1 and KLHL41. In concert with ATF2 and RBX1, promotes degradation of KAT5 thereby attenuating its ability to acetylate and activate ATM. The BCR(KCTD17) E3 ubiquitin ligase complex mediates ubiquitination and degradation of TCHP, a down-regulator of cilium assembly, thereby inducing ciliogenesis. The BCR(KLHL24) E3 ubiquitin ligase complex mediates ubiquitination of KRT14, controls KRT14 levels during keratinocytes differentiation, and is essential for skin integrity. The BCR(KLHL18) E3 ubiquitin ligase complex mediates the ubiquitination of AURKA leading to its activation at the centrosome which is required for initiating mitotic entry. The BCR(KEAP1) E3 ubiquitin ligase complex acts as a key sensor of oxidative and electrophilic stress by mediating ubiquitination and degradation of NFE2L2/NRF2, a transcription factor regulating expression of many cytoprotective genes. As part of the CUL3(KBTBD6/7) E3 ubiquitin ligase complex functions mediates 'Lys-48' ubiquitination and proteasomal degradation of TIAM1. By controlling the ubiquitination of that RAC1 guanine exchange factors (GEF), regulates RAC1 signal transduction and downstream biological processes including the organization of the cytoskeleton, cell migration and cell proliferation. The BCR(KBTBD4) E3 ubiquitin ligase complex targets CoREST corepressor complex components RCOR1, KDM1A/LSD1 and HDAC2 for proteasomal degradation with RCOR1 likely to be the primary target while degradation of KDM1A and HDAC2 is likely due to their association with RCOR1. It also targets RCOR3, MIER2 and MIER3 for proteasomal degradation as well as associated proteins ZNF217 and RREB1 with degradation being dependent on the presence of an ELM2 domain in the target proteins. The BCR(ARMC5) complex mediates premature transcription termination of transcripts that are unfavorably configured for transcriptional elongation by mediating ubiquitination of Pol II subunit POLR2A. Required for 'Lys-63'-linked ubiquitination of large ribosomal subunit protein MRPL12. This chain is Cullin-3 (Cul3), found in Mus musculus (Mouse).